The following is a 316-amino-acid chain: Small ribosomal subunit protein mS26 (316 aa).

The segment at 41-71 is disordered; the sequence is TTRSARDSVSIPPDSPNYIKVPEPPQSSEVR.

This sequence belongs to the mitochondrion-specific ribosomal protein mS26 family. In terms of assembly, component of the mitochondrial small ribosomal subunit (mt-SSU). Mature N.crassa 74S mitochondrial ribosomes consist of a small (37S) and a large (54S) subunit. The 37S small subunit contains a 16S ribosomal RNA (16S mt-rRNA) and 32 different proteins. The 54S large subunit contains a 23S rRNA (23S mt-rRNA) and 42 different proteins.

It localises to the mitochondrion. Functionally, component of the mitochondrial ribosome (mitoribosome), a dedicated translation machinery responsible for the synthesis of mitochondrial genome-encoded proteins, including at least some of the essential transmembrane subunits of the mitochondrial respiratory chain. The mitoribosomes are attached to the mitochondrial inner membrane and translation products are cotranslationally integrated into the membrane. In Neurospora crassa (strain ATCC 24698 / 74-OR23-1A / CBS 708.71 / DSM 1257 / FGSC 987), this protein is Small ribosomal subunit protein mS26 (pet123).